The following is a 474-amino-acid chain: Na(+)/H(+) antiporter NhaA 3 (474 aa).

11 consecutive transmembrane segments (helical) span residues 31-51, 73-93, 110-130, 141-161, 171-191, 194-214, 220-240, 280-300, 309-329, 347-367, and 378-398; these read VGGV…NIPA, LSVA…VAGI, AALP…VYTV, GWAV…AVIG, FLLT…AVFF, TLNF…WLLL, GWYV…NSGV, LAVP…GALA, LGVV…GTWL, VFAV…IGEL, and EVKA…TVLL.

The protein belongs to the NhaA Na(+)/H(+) (TC 2.A.33) antiporter family.

The protein localises to the cell membrane. The catalysed reaction is Na(+)(in) + 2 H(+)(out) = Na(+)(out) + 2 H(+)(in). In terms of biological role, na(+)/H(+) antiporter that extrudes sodium in exchange for external protons. This chain is Na(+)/H(+) antiporter NhaA 3, found in Streptomyces coelicolor (strain ATCC BAA-471 / A3(2) / M145).